Consider the following 355-residue polypeptide: Small ribosomal subunit protein uS2 (355 aa).

Belongs to the universal ribosomal protein uS2 family.

This is Small ribosomal subunit protein uS2 from Methylobacterium radiotolerans (strain ATCC 27329 / DSM 1819 / JCM 2831 / NBRC 15690 / NCIMB 10815 / 0-1).